Consider the following 533-residue polypeptide: MNFPDFNNNNKDDQWERFSQLLFYDEEIGFWLDISRMKFSSEDIGSLQDNFKEACKSMKALEKGSIANIDESRQVGHYWLRNASLAPSKQTSNSIRNEINDIKTFGENILNGKITTAQGKPFTDVLWIGIGGSGLGPLLIVNSLQDNNKGLNFSFLDNVDPNGINKTLNSFRDKLSTTLFVVVSKSGGTPEPQIAMDQTRFFLDKNGLDWSSRAVAITMEGSSLDQIAENEKWLKRFDLPDWVGGRTSITASVGLLPLVLIGEDIDSFLDGASQMDQITRRIDIYKNPSALLAASWYFSGAGKGKRDMVVLPYQDRLQVFSKYLQQLVMESLGKEEDRNANKVNQGLAVYGNKGSTDQHAYVQQLRDGIDNFFVTFVEILEDCTEIPKINKKSPGDYLSGFLQGTRLALSENDRQSITITIKKFNSYTLGSLIALFERAVGIYAELIDINAYHQPGVEAGKKAASNILKLQSEIELLLEDGKLYSIEGIMNTIPGSSQESIYIILRHLSNNDHTYKFVGNLSDPRELQIKKAV.

Residue glutamate 330 is the Proton donor of the active site. Residues histidine 359 and lysine 461 contribute to the active site.

This sequence belongs to the GPI family.

The protein localises to the cytoplasm. It carries out the reaction alpha-D-glucose 6-phosphate = beta-D-fructose 6-phosphate. It functions in the pathway carbohydrate biosynthesis; gluconeogenesis. Its pathway is carbohydrate degradation; glycolysis; D-glyceraldehyde 3-phosphate and glycerone phosphate from D-glucose: step 2/4. Functionally, catalyzes the reversible isomerization of glucose-6-phosphate to fructose-6-phosphate. This is Glucose-6-phosphate isomerase from Prochlorococcus marinus (strain SARG / CCMP1375 / SS120).